A 288-amino-acid chain; its full sequence is ATP phosphoribosyltransferase (288 aa).

Belongs to the ATP phosphoribosyltransferase family. Long subfamily. The cofactor is Mg(2+).

Its subcellular location is the cytoplasm. It catalyses the reaction 1-(5-phospho-beta-D-ribosyl)-ATP + diphosphate = 5-phospho-alpha-D-ribose 1-diphosphate + ATP. Its pathway is amino-acid biosynthesis; L-histidine biosynthesis; L-histidine from 5-phospho-alpha-D-ribose 1-diphosphate: step 1/9. Feedback inhibited by histidine. In terms of biological role, catalyzes the condensation of ATP and 5-phosphoribose 1-diphosphate to form N'-(5'-phosphoribosyl)-ATP (PR-ATP). Has a crucial role in the pathway because the rate of histidine biosynthesis seems to be controlled primarily by regulation of HisG enzymatic activity. This chain is ATP phosphoribosyltransferase, found in Methanococcus maripaludis (strain C6 / ATCC BAA-1332).